A 760-amino-acid chain; its full sequence is Colleterpenol synthase (760 aa).

Positions 14–335 (ASSGLRSKFR…YTRRYPSKAD (322 aa)) are terpene cyclase. Asp95 is a binding site for Mg(2+). Residues 95-99 (DDYYD) carry the DDXXD 1 motif. The NSE/DTE motif lies at 233-241 (NDLYSWPKE). Residues 336 to 759 (LRQPEVEFVD…LELVLRRLWI (424 aa)) are prenyltransferase. A disordered region spans residues 359 to 400 (EEKVVSESVESLPTTEVEDEFSSSDASPGSVDQAISTPPSTT). Residues 391 to 400 (QAISTPPSTT) are compositionally biased toward polar residues. Positions 477, 480, and 509 each coordinate isopentenyl diphosphate. The Mg(2+) site is built by Asp516 and Asp520. The short motif at 516–520 (DDIED) is the DDXXD 2 element. Arg525 is a binding site for dimethylallyl diphosphate. Arg526 contacts isopentenyl diphosphate. Lys605, Thr606, Gln643, Asn650, Lys660, and Lys670 together coordinate dimethylallyl diphosphate.

The protein in the N-terminal section; belongs to the terpene synthase family. It in the C-terminal section; belongs to the FPP/GGPP synthase family. As to quaternary structure, hexamer. Mg(2+) serves as cofactor.

The catalysed reaction is 5 isopentenyl diphosphate + dimethylallyl diphosphate = all-trans-hexaprenyl diphosphate + 5 diphosphate. It carries out the reaction all-trans-hexaprenyl diphosphate + H2O = colleterpenol + diphosphate. Bifunctional terpene synthase that converts dimethylallyl diphosphate (DMAPP) and isopentenyl diphosphate (IPP) into colleterpenol as a single product. The C-terminal prenyltransferase (PT) domain of CgCS catalyzes formation of hexaprenyl diphosphate (HexPP), whereas the N-terminal terpene cyclase (TC) domain catalyzes the cyclization of HexPP to colleterpenol. This chain is Colleterpenol synthase, found in Colletotrichum gloeosporioides (Anthracnose fungus).